The sequence spans 109 residues: METRAILRGVRLSAQKGRLVADQVRGRPVDQALNILAFSPKKGAQIIRKVMESAIANAEHNDGADIDTLKVKTIYVEEGMSLKRFAARAKGRGARILKPTCHIYVTVGE.

Belongs to the universal ribosomal protein uL22 family. Part of the 50S ribosomal subunit.

Functionally, this protein binds specifically to 23S rRNA; its binding is stimulated by other ribosomal proteins, e.g. L4, L17, and L20. It is important during the early stages of 50S assembly. It makes multiple contacts with different domains of the 23S rRNA in the assembled 50S subunit and ribosome. Its function is as follows. The globular domain of the protein is located near the polypeptide exit tunnel on the outside of the subunit, while an extended beta-hairpin is found that lines the wall of the exit tunnel in the center of the 70S ribosome. This Aromatoleum aromaticum (strain DSM 19018 / LMG 30748 / EbN1) (Azoarcus sp. (strain EbN1)) protein is Large ribosomal subunit protein uL22.